A 709-amino-acid chain; its full sequence is UV-stimulated scaffold protein A (709 aa).

Over residues 1 to 10 (MDQKLSKLVE) the composition is skewed to basic and acidic residues. Positions 1 to 20 (MDQKLSKLVEELTTSGEPRL) are disordered. The interval 2–145 (DQKLSKLVEE…HFLRHNKKVD (144 aa)) is VHS-like. The stretch at 165-199 (KHLDKIYQERASQAEREMQEMSGEIESCLTEVESC) forms a coiled coil. 2 disordered regions span residues 230–289 (SCAG…DSDL) and 386–406 (EGGE…EDDE). Positions 280-289 (PSDEDEDSDL) are enriched in acidic residues. Ser-281 and Ser-287 each carry phosphoserine. Positions 386-395 (EGGERRRTEA) are enriched in basic and acidic residues. Residues 397–406 (GDAEEDEDDE) are compositionally biased toward acidic residues. Residue Lys-414 forms a Glycyl lysine isopeptide (Lys-Gly) (interchain with G-Cter in ubiquitin) linkage. A disordered region spans residues 469 to 495 (DHLPPPSSASPSRALPEPQEAQKLAAE). Residues 477 to 486 (ASPSRALPEP) show a composition bias toward low complexity. A UVSSA-type zinc finger spans residues 564-591 (QHWCRAPRPDGRLCERQDRLKCPFHGKI). Zn(2+) contacts are provided by Cys-567, Cys-577, Cys-585, and His-588. Positions 588–655 (HGKIVPRDDE…GKGRGKKRRY (68 aa)) are disordered. Positions 592–632 (VPRDDEGRPLDPEDRAREQRRQLQKQERPEWQDPELMRDVE) are enriched in basic and acidic residues. Positions 646–655 (GKGRGKKRRY) are enriched in basic residues.

It belongs to the UVSSA family. Interacts with the elongating form of RNA polymerase II (RNA pol IIo) during transcription stress. Interacts with the TFIIH complex during transcription stress. Interacts with ERCC6. Interacts with ERCC8. Interacts with USP7. In terms of processing, monoubiquitinated at Lys-414 in response to transcription stress; this promotes efficient transfer of TFIIH to stalled RNA polymerase II.

Its subcellular location is the chromosome. Its function is as follows. Factor involved in transcription-coupled nucleotide excision repair (TC-NER), a mechanism that rapidly removes RNA polymerase II-blocking lesions from the transcribed strand of active genes. Acts as a key adapter that promotes recruitment of factors involved in TC-NER. Facilitates the ubiquitination of the elongating form of RNA polymerase II (RNA pol IIo) at DNA damage sites, thereby promoting RNA pol IIo backtracking and access by the TC-NER machinery to lesion sites. Also promotes stabilization of ERCC6/CSB by recruiting deubiquitinating enzyme USP7 to TC-NER complexes, preventing UV-induced degradation of ERCC6 by the proteasome. Mediates the recruitment of the TFIIH complex and other factors that are required for nucleotide excision repair to RNA polymerase II. Also required to inactivate stalled RNA polymerase II by blocking the access of TCEA1/TFIIS, thereby preventing reactivation of RNA polymerase II. Not involved in processing oxidative damage. In Homo sapiens (Human), this protein is UV-stimulated scaffold protein A.